Consider the following 41-residue polypeptide: Ornatin-A3 (41 aa).

The short motif at 33–35 (RGD) is the Cell attachment site element.

It belongs to the ornatin family.

The protein localises to the secreted. In terms of biological role, potent inhibitor of fibrinogen interaction with platelet receptors expressed on glycoprotein IIb-IIIa complex. May prevent blood from clotting during either feeding and/or storage of ingested blood. This is Ornatin-A3 from Placobdella ornata (Turtle leech).